The primary structure comprises 263 residues: 3'-5' ssDNA/RNA exonuclease TatD (263 aa).

Residues Glu-91, His-127, and His-152 each contribute to the a divalent metal cation site.

The protein belongs to the metallo-dependent hydrolases superfamily. TatD-type hydrolase family. TatD subfamily. As to quaternary structure, monomer. Requires Mg(2+) as cofactor.

It localises to the cytoplasm. Its function is as follows. 3'-5' exonuclease that prefers single-stranded DNA and RNA. May play a role in the H(2)O(2)-induced DNA damage repair. The chain is 3'-5' ssDNA/RNA exonuclease TatD from Cronobacter turicensis (strain DSM 18703 / CCUG 55852 / LMG 23827 / z3032).